Consider the following 93-residue polypeptide: Acylphosphatase (93 aa).

In terms of domain architecture, Acylphosphatase-like spans 6–93 (RAHVFISGRV…GEERGFSIIW (88 aa)). Active-site residues include arginine 21 and asparagine 39.

The protein belongs to the acylphosphatase family.

It carries out the reaction an acyl phosphate + H2O = a carboxylate + phosphate + H(+). The polypeptide is Acylphosphatase (acyP) (Roseiflexus sp. (strain RS-1)).